The sequence spans 405 residues: Argininosuccinate synthase (405 aa).

ATP is bound by residues 12 to 20 and Ala40; that span reads AYSGGLDTS. 2 residues coordinate L-citrulline: Tyr92 and Ser97. Gly122 serves as a coordination point for ATP. Residues Thr124, Asn128, and Asp129 each coordinate L-aspartate. Asn128 lines the L-citrulline pocket. L-citrulline is bound by residues Arg132, Ser181, Ser190, Glu266, and Tyr278.

This sequence belongs to the argininosuccinate synthase family. Type 1 subfamily. Homotetramer.

The protein localises to the cytoplasm. It catalyses the reaction L-citrulline + L-aspartate + ATP = 2-(N(omega)-L-arginino)succinate + AMP + diphosphate + H(+). It participates in amino-acid biosynthesis; L-arginine biosynthesis; L-arginine from L-ornithine and carbamoyl phosphate: step 2/3. The sequence is that of Argininosuccinate synthase from Edwardsiella ictaluri (strain 93-146).